A 301-amino-acid polypeptide reads, in one-letter code: Tetrahydromethanopterin S-methyltransferase subunit E (301 aa).

5 consecutive transmembrane segments (helical) span residues 85 to 105 (VIFAIAIGALVASAVHGTYCI), 130 to 150 (HTPVMMGYAFITTFCILVVSY), 151 to 171 (IMVAVLAHPFPLTLLAFIWGI), 232 to 252 (PVTGLAFGMTVFLSGWVTAVF), and 258 to 278 (LTMGWLSVAAGVILVLLLIIW).

This sequence belongs to the MtrE family. The complex is composed of 8 subunits; MtrA, MtrB, MtrC, MtrD, MtrE, MtrF, MtrG and MtrH.

It localises to the cell membrane. It catalyses the reaction 5-methyl-5,6,7,8-tetrahydromethanopterin + coenzyme M + 2 Na(+)(in) = 5,6,7,8-tetrahydromethanopterin + methyl-coenzyme M + 2 Na(+)(out). In terms of biological role, part of a complex that catalyzes the formation of methyl-coenzyme M and tetrahydromethanopterin from coenzyme M and methyl-tetrahydromethanopterin. This is an energy-conserving, sodium-ion translocating step. The sequence is that of Tetrahydromethanopterin S-methyltransferase subunit E from Methanococcoides burtonii (strain DSM 6242 / NBRC 107633 / OCM 468 / ACE-M).